The following is a 334-amino-acid chain: Cytoskeleton protein RodZ (334 aa).

The Cytoplasmic segment spans residues Met1–Gly111. Residues Leu19 to Leu71 form the HTH cro/C1-type domain. Residues Gln30–Glu49 constitute a DNA-binding region (H-T-H motif). A helical; Signal-anchor for type II membrane protein membrane pass occupies residues Trp112–Trp132. Topologically, residues Trp133 to Gln334 are periplasmic. The tract at residues Asn155 to Gly241 is disordered. A compositionally biased stretch (polar residues) spans Gly161 to Asp175. Low complexity-rich tracts occupy residues Thr176–Ala211 and Thr219–Gly241.

Belongs to the RodZ family.

The protein localises to the cell inner membrane. Its function is as follows. Cytoskeletal protein that is involved in cell-shape control through regulation of the length of the long axis. In Salmonella dublin (strain CT_02021853), this protein is Cytoskeleton protein RodZ.